Consider the following 132-residue polypeptide: Ribonuclease VapC (132 aa).

The region spanning 4–123 is the PINc domain; it reads YMLDTNIVIY…SNNLREFERV (120 aa). Residues Asp7 and Asp98 each coordinate Mg(2+).

Belongs to the PINc/VapC protein family. In terms of assembly, probably forms a complex with cognate antitoxin VapB2. It depends on Mg(2+) as a cofactor.

In terms of biological role, toxic component of a type II toxin-antitoxin (TA) system. Acts as an RNase. Its toxic effect is neutralized by cognate antitoxin VapB2 but not by non-cognate antitoxin VapB1. The sequence is that of Ribonuclease VapC from Haemophilus influenzae (strain 86-028NP).